The primary structure comprises 103 residues: Large ribosomal subunit protein bL21 (103 aa).

It belongs to the bacterial ribosomal protein bL21 family. Part of the 50S ribosomal subunit. Contacts protein L20.

Functionally, this protein binds to 23S rRNA in the presence of protein L20. The protein is Large ribosomal subunit protein bL21 of Parvibaculum lavamentivorans (strain DS-1 / DSM 13023 / NCIMB 13966).